Consider the following 205-residue polypeptide: Imidazole glycerol phosphate synthase subunit HisH (205 aa).

The Glutamine amidotransferase type-1 domain maps to 3 to 205 (KIGLIDYGMG…LLRRWIKSIQ (203 aa)). Cys-81 (nucleophile) is an active-site residue. Catalysis depends on residues His-185 and Glu-187.

In terms of assembly, heterodimer of HisH and HisF.

The protein resides in the cytoplasm. The catalysed reaction is 5-[(5-phospho-1-deoxy-D-ribulos-1-ylimino)methylamino]-1-(5-phospho-beta-D-ribosyl)imidazole-4-carboxamide + L-glutamine = D-erythro-1-(imidazol-4-yl)glycerol 3-phosphate + 5-amino-1-(5-phospho-beta-D-ribosyl)imidazole-4-carboxamide + L-glutamate + H(+). It catalyses the reaction L-glutamine + H2O = L-glutamate + NH4(+). It participates in amino-acid biosynthesis; L-histidine biosynthesis; L-histidine from 5-phospho-alpha-D-ribose 1-diphosphate: step 5/9. Its function is as follows. IGPS catalyzes the conversion of PRFAR and glutamine to IGP, AICAR and glutamate. The HisH subunit catalyzes the hydrolysis of glutamine to glutamate and ammonia as part of the synthesis of IGP and AICAR. The resulting ammonia molecule is channeled to the active site of HisF. The chain is Imidazole glycerol phosphate synthase subunit HisH from Prochlorococcus marinus subsp. pastoris (strain CCMP1986 / NIES-2087 / MED4).